We begin with the raw amino-acid sequence, 523 residues long: Volkensin (523 aa).

Catalysis depends on residues Y74, Y113, E162, and R165. Residue 111–113 (GGY) participates in AMP binding. 2 disulfide bridges follow: C245/C269 and C285/C304. Positions 251-265 (QSDSPLVIRSFVDRN) are cleaved as a propeptide — linker peptide. The region spanning 270-397 (PSGETTAFIV…YAASQAWRVT (128 aa)) is the Ricin B-type lectin 1 domain. Residues 287–291 (DVKVE), Q300, K305, and N311 each bind a carbohydrate. C328 and C343 are disulfide-bonded. Residues N358 and N398 each coordinate a carbohydrate. N-linked (GlcNAc...) asparagine glycosylation is found at N358 and N398. The region spanning 400 to 523 (TVPTVTTIVG…HGNSNQQWFL (124 aa)) is the Ricin B-type lectin 2 domain. 2 disulfides stabilise this stretch: C414–C427 and C453–C471.

It in the N-terminal section; belongs to the ribosome-inactivating protein family. Type 2 RIP subfamily. As to quaternary structure, disulfide-linked dimer of A and B chains. In terms of processing, N-glycosylated. Contains mannose and galactose. In terms of tissue distribution, expressed in roots (at protein level). Expressed in seeds (at protein level).

The enzyme catalyses Endohydrolysis of the N-glycosidic bond at one specific adenosine on the 28S rRNA.. Hemagglutinating activity is inhibited by galactose and structurally related sugars. Its function is as follows. Has N-glycosidase activity and is responsible for inhibiting protein synthesis through the catalytic inactivation of 60S ribosomal subunits by removing a specific adenine of 28S rRNA. Inhibits GTP-dependent binding of EF2 (elongation factor 2) to ribosomes. Functionally, binds to cell receptors and probably facilitates the entry into the cell of the A chain. Also acts as a galactose-specific lectin responsible for cell agglutination. The chain is Volkensin from Adenia volkensii (Kilyambiti plant).